A 472-amino-acid polypeptide reads, in one-letter code: 2-oxoisovalerate dehydrogenase subunit alpha 1, mitochondrial (472 aa).

A mitochondrion-targeting transit peptide spans 1-56 (MAIWFARSKTLVSSLRHNLNLSTILIKRDYSHRPIFYTTSQLSSTAYLSPFGSLRH). 185 to 187 (QYR) provides a ligand contact to thiamine diphosphate. The K(+) site is built by Ser234, Thr239, and Gln240.

The protein belongs to the BCKDHA family. Heterotetramer of alpha and beta chains. The cofactor is thiamine diphosphate.

Its subcellular location is the mitochondrion matrix. It catalyses the reaction N(6)-[(R)-lipoyl]-L-lysyl-[protein] + 3-methyl-2-oxobutanoate + H(+) = N(6)-[(R)-S(8)-2-methylpropanoyldihydrolipoyl]-L-lysyl-[protein] + CO2. Functionally, the branched-chain alpha-keto dehydrogenase complex catalyzes the overall conversion of alpha-keto acids to acyl-CoA and CO(2). It contains multiple copies of three enzymatic components: branched-chain alpha-keto acid decarboxylase (E1), lipoamide acyltransferase (E2) and lipoamide dehydrogenase (E3). Required during sugar starvation. This is 2-oxoisovalerate dehydrogenase subunit alpha 1, mitochondrial from Arabidopsis thaliana (Mouse-ear cress).